Reading from the N-terminus, the 131-residue chain is Methyl-coenzyme M reductase operon protein D (131 aa).

In terms of assembly, MCR is composed of three subunits: alpha, beta, and gamma. The function of proteins C and D is not known.

This is Methyl-coenzyme M reductase operon protein D (mcrD) from Methanothermus fervidus.